The primary structure comprises 647 residues: 1-phosphatidylinositol 4,5-bisphosphate phosphodiesterase zeta-1 (647 aa).

An EF-hand domain is found at 43-78 (CHFAHVKHIFKENDRQNQGRITIEEFRAIYRCIVHR). Positions 163–307 (QDMNHPLSDY…LKFKILVKNR (145 aa)) constitute a PI-PLC X-box domain. Catalysis depends on residues His-178 and His-223. The 117-residue stretch at 386–502 (LSDLVIYTKA…GYILKPDILR (117 aa)) folds into the PI-PLC Y-box domain. One can recognise a C2 domain in the interval 502 to 627 (RDTTLGFNPN…KGYRRVPLFS (126 aa)).

Interacts via its C2 domain with PtdIns(3)P and, to a lesser extent, PtdIns(5)P in vitro. Ca(2+) serves as cofactor. In terms of tissue distribution, highly expressed in postpuberal testis, where expression is sperm cell-specific. Also expressed in brain of both sexes.

It localises to the nucleus. Its subcellular location is the cytoplasm. It is found in the perinuclear region. It catalyses the reaction a 1,2-diacyl-sn-glycero-3-phospho-(1D-myo-inositol-4,5-bisphosphate) + H2O = 1D-myo-inositol 1,4,5-trisphosphate + a 1,2-diacyl-sn-glycerol + H(+). The production of the second messenger molecules diacylglycerol (DAG) and inositol 1,4,5-trisphosphate (IP3) is mediated by activated phosphatidylinositol-specific phospholipase C enzymes. In vitro, hydrolyzes PtdIns(4,5)P2 in a Ca(2+)-dependent manner. Triggers intracellular Ca(2+) oscillations in oocytes solely during M phase and is involved in inducing oocyte activation and initiating embryonic development up to the blastocyst stage. Is therefore a strong candidate for the egg-activating soluble sperm factor that is transferred from the sperm into the egg cytoplasm following gamete membrane fusion. May exert an inhibitory effect on phospholipase-C-coupled processes that depend on calcium ions and protein kinase C, including CFTR trafficking and function. This chain is 1-phosphatidylinositol 4,5-bisphosphate phosphodiesterase zeta-1, found in Mus musculus (Mouse).